The chain runs to 138 residues: Basic phospholipase A2 PLA-B' (138 aa).

Positions 1-16 are cleaved as a signal peptide; the sequence is MRTLWITAVLLVGVEG. 7 disulfides stabilise this stretch: C42–C131, C44–C60, C59–C111, C65–C138, C66–C104, C73–C97, and C91–C102. The Ca(2+) site is built by Y43, G45, and G47. H63 is an active-site residue. D64 serves as a coordination point for Ca(2+). Residue D105 is part of the active site.

This sequence belongs to the phospholipase A2 family. Group II subfamily. D49 sub-subfamily. Ca(2+) serves as cofactor. Expressed by the venom gland.

The protein localises to the secreted. It carries out the reaction a 1,2-diacyl-sn-glycero-3-phosphocholine + H2O = a 1-acyl-sn-glycero-3-phosphocholine + a fatty acid + H(+). Its function is as follows. PLA2 catalyzes the calcium-dependent hydrolysis of the 2-acyl groups in 3-sn-phosphoglycerides. This is Basic phospholipase A2 PLA-B' from Protobothrops flavoviridis (Habu).